We begin with the raw amino-acid sequence, 302 residues long: Glutaminase (302 aa).

7 residues coordinate substrate: Ser61, Asn111, Glu155, Asn162, Tyr186, Tyr238, and Val256.

It belongs to the glutaminase family. Homotetramer.

The catalysed reaction is L-glutamine + H2O = L-glutamate + NH4(+). In Ectopseudomonas mendocina (strain ymp) (Pseudomonas mendocina), this protein is Glutaminase.